Consider the following 524-residue polypeptide: mRNA cap guanine-N(7) methyltransferase (524 aa).

A disordered region spans residues 1–155; sequence MSDKEAGVAS…DKKRAHDEAE (155 aa). Positions 19–40 are enriched in basic and acidic residues; it reads NKDEVDVKNTEEHSKQESKSDI. Residues 68–77 are compositionally biased toward polar residues; that stretch reads NNKVISSVYN. Over residues 90-99 the composition is skewed to basic and acidic residues; it reads KTTDKYDKYG. Residues 100–112 are compositionally biased toward polar residues; the sequence is SRSTPIATPTAPV. The mRNA cap 0 methyltransferase domain occupies 214–522; the sequence is SPIYKLRNFN…FYIGFVFEKL (309 aa). 223 to 224 contacts mRNA; that stretch reads NN. Residues K227, C251, D273, D319, Q349, and Y354 each contribute to the S-adenosyl-L-methionine site.

The protein belongs to the class I-like SAM-binding methyltransferase superfamily. mRNA cap 0 methyltransferase family.

It is found in the nucleus. It carries out the reaction a 5'-end (5'-triphosphoguanosine)-ribonucleoside in mRNA + S-adenosyl-L-methionine = a 5'-end (N(7)-methyl 5'-triphosphoguanosine)-ribonucleoside in mRNA + S-adenosyl-L-homocysteine. Its function is as follows. Responsible for methylating the 5'-cap structure of mRNAs. The chain is mRNA cap guanine-N(7) methyltransferase (ABD1) from Debaryomyces hansenii (strain ATCC 36239 / CBS 767 / BCRC 21394 / JCM 1990 / NBRC 0083 / IGC 2968) (Yeast).